A 283-amino-acid chain; its full sequence is 4-diphosphocytidyl-2-C-methyl-D-erythritol kinase (283 aa).

Lys-10 is a catalytic residue. Position 99–109 (99–109 (PMGGGLGGGSS)) interacts with ATP. Residue Asp-141 is part of the active site.

This sequence belongs to the GHMP kinase family. IspE subfamily. Homodimer.

The catalysed reaction is 4-CDP-2-C-methyl-D-erythritol + ATP = 4-CDP-2-C-methyl-D-erythritol 2-phosphate + ADP + H(+). Its pathway is isoprenoid biosynthesis; isopentenyl diphosphate biosynthesis via DXP pathway; isopentenyl diphosphate from 1-deoxy-D-xylulose 5-phosphate: step 3/6. Functionally, catalyzes the phosphorylation of the position 2 hydroxy group of 4-diphosphocytidyl-2C-methyl-D-erythritol. The polypeptide is 4-diphosphocytidyl-2-C-methyl-D-erythritol kinase (Salmonella typhi).